The sequence spans 236 residues: Small ribosomal subunit protein uS3 (236 aa).

A KH type-2 domain is found at 39–112; the sequence is IREFITKHPK…RINLKVEEVG (74 aa). The interval 212–236 is disordered; it reads YGDDNDGADAQTGQASKKPKRSYKR.

This sequence belongs to the universal ribosomal protein uS3 family. In terms of assembly, part of the 30S ribosomal subunit. Forms a tight complex with proteins S10 and S14.

Its function is as follows. Binds the lower part of the 30S subunit head. Binds mRNA in the 70S ribosome, positioning it for translation. This is Small ribosomal subunit protein uS3 from Rhodopirellula baltica (strain DSM 10527 / NCIMB 13988 / SH1).